An 801-amino-acid polypeptide reads, in one-letter code: PR domain zinc finger protein 4 (801 aa).

The 118-residue stretch at 412 to 529 folds into the SET domain; sequence KQLVLRQSIV…PENELLFYYS (118 aa). The C2H2-type 1; atypical zinc-finger motif lies at 545 to 566; that stretch reads HLCNCGKECNSYTEFKAHLTSH. 4 C2H2-type zinc fingers span residues 618–640, 646–668, 674–696, and 702–724; these read HKCDFCSKAFSDPSNLRTHLKIH, YRCTLCDKSFTQKAHLESHMVIH, LKCDYCDKLFMRRQDLKQHVLIH, and IKCPKCDKLFLRTNHLKKHLNSH. The C2H2-type 6; atypical zinc finger occupies 730–752; the sequence is YVCEKCTKAYLTKYHLTRHLKTC. The disordered stretch occupies residues 751–782; the sequence is TCKGPTSSSSAPEEEEEDDSEEEDLADSVGTE. Residues 762-776 are compositionally biased toward acidic residues; that stretch reads PEEEEEDDSEEEDLA.

This sequence belongs to the class V-like SAM-binding methyltransferase superfamily. Expressed in many tissues. Highly expressed in ovary, testis, pancreas, brain, heart and prostate.

The protein resides in the nucleus. Its function is as follows. May function as a transcription factor involved in cell differentiation. In Homo sapiens (Human), this protein is PR domain zinc finger protein 4 (PRDM4).